The chain runs to 485 residues: Ribosomal protein uS12 methylthiotransferase RimO (485 aa).

The region spanning 37-147 is the MTTase N-terminal domain; sequence SRIGFVSLGC…VVEQVHEHLP (111 aa). [4Fe-4S] cluster is bound by residues C46, C82, C111, C179, C183, and C186. The region spanning 165 to 402 is the Radical SAM core domain; it reads LTPRHYAYLK…MEVQGEISAA (238 aa). Residues 405–471 enclose the TRAM domain; sequence KARIGNEYQV…EHDVWAVLSE (67 aa).

The protein belongs to the methylthiotransferase family. RimO subfamily. [4Fe-4S] cluster serves as cofactor.

The protein resides in the cytoplasm. The enzyme catalyses L-aspartate(89)-[ribosomal protein uS12]-hydrogen + (sulfur carrier)-SH + AH2 + 2 S-adenosyl-L-methionine = 3-methylsulfanyl-L-aspartate(89)-[ribosomal protein uS12]-hydrogen + (sulfur carrier)-H + 5'-deoxyadenosine + L-methionine + A + S-adenosyl-L-homocysteine + 2 H(+). Catalyzes the methylthiolation of an aspartic acid residue of ribosomal protein uS12. The protein is Ribosomal protein uS12 methylthiotransferase RimO of Alteromonas mediterranea (strain DSM 17117 / CIP 110805 / LMG 28347 / Deep ecotype).